The chain runs to 160 residues: Ureidoglycolate lyase (160 aa).

This sequence belongs to the ureidoglycolate lyase family. As to quaternary structure, homodimer. Requires Ni(2+) as cofactor.

The enzyme catalyses (S)-ureidoglycolate = urea + glyoxylate. It functions in the pathway nitrogen metabolism; (S)-allantoin degradation. Catalyzes the catabolism of the allantoin degradation intermediate (S)-ureidoglycolate, generating urea and glyoxylate. Involved in the utilization of allantoin as nitrogen source. This is Ureidoglycolate lyase from Salmonella agona (strain SL483).